The primary structure comprises 231 residues: Putative N-acetylmannosamine-6-phosphate 2-epimerase (231 aa).

It belongs to the NanE family.

The catalysed reaction is an N-acyl-D-glucosamine 6-phosphate = an N-acyl-D-mannosamine 6-phosphate. Its pathway is amino-sugar metabolism; N-acetylneuraminate degradation; D-fructose 6-phosphate from N-acetylneuraminate: step 3/5. In terms of biological role, converts N-acetylmannosamine-6-phosphate (ManNAc-6-P) to N-acetylglucosamine-6-phosphate (GlcNAc-6-P). This Listeria monocytogenes serotype 4b (strain CLIP80459) protein is Putative N-acetylmannosamine-6-phosphate 2-epimerase.